The following is a 123-amino-acid chain: Large ribosomal subunit protein bL12 (123 aa).

It belongs to the bacterial ribosomal protein bL12 family. Homodimer. Part of the ribosomal stalk of the 50S ribosomal subunit. Forms a multimeric L10(L12)X complex, where L10 forms an elongated spine to which 2 to 4 L12 dimers bind in a sequential fashion. Binds GTP-bound translation factors.

In terms of biological role, forms part of the ribosomal stalk which helps the ribosome interact with GTP-bound translation factors. Is thus essential for accurate translation. The polypeptide is Large ribosomal subunit protein bL12 (Burkholderia vietnamiensis (strain G4 / LMG 22486) (Burkholderia cepacia (strain R1808))).